Reading from the N-terminus, the 225-residue chain is 3-dehydroquinate dehydratase (225 aa).

3-dehydroquinate-binding positions include 30–32 and R62; that span reads EWR. The active-site Proton donor/acceptor is the H118. The active-site Schiff-base intermediate with substrate is the K143. 3-dehydroquinate is bound by residues R186, S205, and Q209.

Belongs to the type-I 3-dehydroquinase family. Homodimer.

It catalyses the reaction 3-dehydroquinate = 3-dehydroshikimate + H2O. It functions in the pathway metabolic intermediate biosynthesis; chorismate biosynthesis; chorismate from D-erythrose 4-phosphate and phosphoenolpyruvate: step 3/7. Its function is as follows. Involved in the third step of the chorismate pathway, which leads to the biosynthesis of aromatic amino acids. Catalyzes the cis-dehydration of 3-dehydroquinate (DHQ) and introduces the first double bond of the aromatic ring to yield 3-dehydroshikimate. The chain is 3-dehydroquinate dehydratase from Streptococcus thermophilus (strain ATCC BAA-250 / LMG 18311).